The chain runs to 119 residues: Large ribosomal subunit protein uL18 (119 aa).

The segment at 1–25 (MITKIDKNKVRKKRHARVRSKISGT) is disordered. The segment covering 9-20 (KVRKKRHARVRS) has biased composition (basic residues).

This sequence belongs to the universal ribosomal protein uL18 family. As to quaternary structure, part of the 50S ribosomal subunit; part of the 5S rRNA/L5/L18/L25 subcomplex. Contacts the 5S and 23S rRNAs.

This is one of the proteins that bind and probably mediate the attachment of the 5S RNA into the large ribosomal subunit, where it forms part of the central protuberance. In Listeria innocua serovar 6a (strain ATCC BAA-680 / CLIP 11262), this protein is Large ribosomal subunit protein uL18.